We begin with the raw amino-acid sequence, 145 residues long: 3-dehydroquinate dehydratase (145 aa).

Tyr-24 (proton acceptor) is an active-site residue. Asn-75, His-81, and Asp-88 together coordinate substrate. The Proton donor role is filled by His-102. Residues 103 to 104 and Arg-113 each bind substrate; that span reads LS.

It belongs to the type-II 3-dehydroquinase family. Homododecamer.

The catalysed reaction is 3-dehydroquinate = 3-dehydroshikimate + H2O. It functions in the pathway metabolic intermediate biosynthesis; chorismate biosynthesis; chorismate from D-erythrose 4-phosphate and phosphoenolpyruvate: step 3/7. Its function is as follows. Catalyzes a trans-dehydration via an enolate intermediate. In Chelativorans sp. (strain BNC1), this protein is 3-dehydroquinate dehydratase.